Consider the following 334-residue polypeptide: Small ribosomal subunit protein RACK1z (334 aa).

WD repeat units follow at residues glycine 16 to aspartate 47, glycine 73 to aspartate 103, glycine 115 to asparagine 145, glycine 163 to asparagine 195, glycine 207 to aspartate 237, aspartate 248 to aspartate 277, and asparagine 296 to lysine 326.

It belongs to the WD repeat G protein beta family. Ribosomal protein RACK1 subfamily. Interacts with RAC1, RAC3, RAC6, RAR1, SGT1 and RBOHB. Homodimer and heterodimer with RACK1B. As to expression, widely expressed.

The protein resides in the cytoplasm. Its subcellular location is the cell membrane. Functionally, component of the RACK1 regulatory proteins that functions in innate immunity by interacting with multiple proteins in the RAC1 immune complex. Acts as a positive regulator of reactive oxygen species (ROS) production and is required for resistance against rice blast (M.grisea) infection. In Oryza sativa subsp. japonica (Rice), this protein is Small ribosomal subunit protein RACK1z (RACK1A).